The following is a 349-amino-acid chain: Biotin synthase (349 aa).

One can recognise a Radical SAM core domain in the interval Gly-60–Arg-287. 3 residues coordinate [4Fe-4S] cluster: Cys-75, Cys-79, and Cys-82. Residues Cys-119, Cys-150, Cys-210, and Arg-282 each coordinate [2Fe-2S] cluster.

This sequence belongs to the radical SAM superfamily. Biotin synthase family. Homodimer. It depends on [4Fe-4S] cluster as a cofactor. [2Fe-2S] cluster serves as cofactor.

It carries out the reaction (4R,5S)-dethiobiotin + (sulfur carrier)-SH + 2 reduced [2Fe-2S]-[ferredoxin] + 2 S-adenosyl-L-methionine = (sulfur carrier)-H + biotin + 2 5'-deoxyadenosine + 2 L-methionine + 2 oxidized [2Fe-2S]-[ferredoxin]. Its pathway is cofactor biosynthesis; biotin biosynthesis; biotin from 7,8-diaminononanoate: step 2/2. Catalyzes the conversion of dethiobiotin (DTB) to biotin by the insertion of a sulfur atom into dethiobiotin via a radical-based mechanism. The sequence is that of Biotin synthase from Albidiferax ferrireducens (strain ATCC BAA-621 / DSM 15236 / T118) (Rhodoferax ferrireducens).